The following is a 113-amino-acid chain: Large ribosomal subunit protein bL19 (113 aa).

Belongs to the bacterial ribosomal protein bL19 family.

Its function is as follows. This protein is located at the 30S-50S ribosomal subunit interface and may play a role in the structure and function of the aminoacyl-tRNA binding site. The protein is Large ribosomal subunit protein bL19 of Mycolicibacterium gilvum (strain PYR-GCK) (Mycobacterium gilvum (strain PYR-GCK)).